The chain runs to 59 residues: Small ribosomal subunit protein bS21 (59 aa).

Belongs to the bacterial ribosomal protein bS21 family.

The protein is Small ribosomal subunit protein bS21 of Acholeplasma laidlawii (strain PG-8A).